Reading from the N-terminus, the 396-residue chain is Phosphoglycerate kinase (396 aa).

Substrate contacts are provided by residues 21–23 (DIN), R36, 59–62 (HFGR), R114, and R147. ATP contacts are provided by residues K197, E319, and 349-352 (GGDT).

This sequence belongs to the phosphoglycerate kinase family. In terms of assembly, monomer.

It is found in the cytoplasm. It carries out the reaction (2R)-3-phosphoglycerate + ATP = (2R)-3-phospho-glyceroyl phosphate + ADP. It participates in carbohydrate degradation; glycolysis; pyruvate from D-glyceraldehyde 3-phosphate: step 2/5. This Jannaschia sp. (strain CCS1) protein is Phosphoglycerate kinase.